The following is a 144-amino-acid chain: Gas vesicle protein I1 (144 aa).

Positions 1–144 are disordered; that stretch reads MSDKQQQKHK…SPTEDEVNDE (144 aa). Composition is skewed to basic residues over residues 7–17 and 26–46; these read QKHKQKARQAR and KARR…TRNR. A compositionally biased stretch (polar residues) spans 75-94; sequence MPPQKSNAENAVRNSHSTVP. Positions 122 to 136 are enriched in low complexity; the sequence is SEASAPSDESASGSP.

The protein belongs to the gas vesicle GvpI family. As to quaternary structure, gvpF to GvpM interact with each other in vitro, and may form multi-subunit complex(es). Interacts with GvpC1 and GvpO.

The protein localises to the gas vesicle. Proteins GvpF to GvpM might be involved in nucleating gas vesicle formation. A minor component of the gas vesicle. Gas vesicles are hollow, gas filled proteinaceous nanostructures found in several microbial planktonic microorganisms. They allow positioning of halobacteria at the optimal depth for growth in the poorly aerated, shallow brine pools of their habitat. Functionally, expression of a 9.5 kb p-vac DNA fragment containing 2 divergently transcribed regions (gvpD-gvpE-gvpF-gvpG-gvpH-gvpI-gvpJ-gvpK-gvpL-gvpM and gvpA-gvpC-gvpN-gvpO) allows H.volcanii to produce gas vesicles. A similar region restores gas vesicle production in H.halobium without the p-vac locus, but it still has the c-vac locus. This Halobacterium salinarum (strain ATCC 700922 / JCM 11081 / NRC-1) (Halobacterium halobium) protein is Gas vesicle protein I1 (gvpI11).